The following is a 297-amino-acid chain: Tyrosine recombinase XerC (297 aa).

The 84-residue stretch at 1–84 (MEEIQVTFLN…TLRTFYEFWM (84 aa)) folds into the Core-binding (CB) domain. Positions 105–286 (YLPQFFYEEE…SNQQLRKVYL (182 aa)) constitute a Tyr recombinase domain. Residues arginine 145, lysine 169, histidine 238, arginine 241, and histidine 264 contribute to the active site. Tyrosine 273 acts as the O-(3'-phospho-DNA)-tyrosine intermediate in catalysis.

Belongs to the 'phage' integrase family. XerC subfamily. In terms of assembly, forms a cyclic heterotetrameric complex composed of two molecules of XerC and two molecules of XerD.

Its subcellular location is the cytoplasm. Functionally, site-specific tyrosine recombinase, which acts by catalyzing the cutting and rejoining of the recombining DNA molecules. The XerC-XerD complex is essential to convert dimers of the bacterial chromosome into monomers to permit their segregation at cell division. It also contributes to the segregational stability of plasmids. The chain is Tyrosine recombinase XerC from Staphylococcus haemolyticus (strain JCSC1435).